The following is a 313-amino-acid chain: Porphobilinogen deaminase (313 aa).

C241 is subject to S-(dipyrrolylmethanemethyl)cysteine.

The protein belongs to the HMBS family. Monomer. Dipyrromethane is required as a cofactor.

The catalysed reaction is 4 porphobilinogen + H2O = hydroxymethylbilane + 4 NH4(+). It participates in porphyrin-containing compound metabolism; protoporphyrin-IX biosynthesis; coproporphyrinogen-III from 5-aminolevulinate: step 2/4. The protein operates within porphyrin-containing compound metabolism; chlorophyll biosynthesis. Tetrapolymerization of the monopyrrole PBG into the hydroxymethylbilane pre-uroporphyrinogen in several discrete steps. The protein is Porphobilinogen deaminase of Chlorobium phaeovibrioides (strain DSM 265 / 1930) (Prosthecochloris vibrioformis (strain DSM 265)).